Reading from the N-terminus, the 638-residue chain is Sodium- and chloride-dependent neutral and basic amino acid transporter B(0+) (638 aa).

The Cytoplasmic segment spans residues 1–44; sequence MDRLKCPNFFKCRQKEKVTASSENFHVGENDENQERGNWSKKSD. Transmembrane regions (helical) follow at residues 45–65, 72–92, and 110–130; these read YLLS…FPYL, GAFL…LFFL, and ILPL…FVAI. The Extracellular portion of the chain corresponds to 131–230; that stretch reads YYNVIIAYSL…RSSGMDETGV (100 aa). Residues N155, N163, N174, N185, N193, and N198 are each glycosylated (N-linked (GlcNAc...) asparagine). Helical transmembrane passes span 231–251 and 257–277; these read VVWY…AALF and SGKV…ILLI. A glycan (N-linked (GlcNAc...) asparagine) is linked at N298. 7 consecutive transmembrane segments (helical) span residues 311–331, 344–364, 395–415, 453–473, 476–496, 524–544, and 559–579; these read AATQ…ALSS, IIVC…IFSI, LAQL…LLTL, ILFL…VHLI, FCAG…IIWI, CWFV…LVKF, and VALG…MAII. Residues 580-638 lie on the Cytoplasmic side of the membrane; the sequence is KIVQAEGNILQRIISCCRPASNWGPYLEKHRGERYRDMAEPAKETDHEIPTISGSTKPE. Over residues 618–628 the composition is skewed to basic and acidic residues; that stretch reads AEPAKETDHEI. The segment at 618–638 is disordered; the sequence is AEPAKETDHEIPTISGSTKPE.

Belongs to the sodium:neurotransmitter symporter (SNF) (TC 2.A.22) family. SLC6A14 subfamily. In terms of tissue distribution, expressed in the distal region of the intestinal tract: cecum and colon.

The protein localises to the membrane. Its subcellular location is the apical cell membrane. It carries out the reaction glycine(out) + chloride(out) + 2 Na(+)(out) = glycine(in) + chloride(in) + 2 Na(+)(in). The enzyme catalyses L-leucine(out) + chloride(out) + 2 Na(+)(out) = L-leucine(in) + chloride(in) + 2 Na(+)(in). The catalysed reaction is L-glutamine(out) + chloride(out) + 2 Na(+)(out) = L-glutamine(in) + chloride(in) + 2 Na(+)(in). It catalyses the reaction L-arginine(out) + chloride(out) + 2 Na(+)(out) = L-arginine(in) + chloride(in) + 2 Na(+)(in). It carries out the reaction (R)-carnitine(out) + chloride(out) + 2 Na(+)(out) = (R)-carnitine(in) + chloride(in) + 2 Na(+)(in). The enzyme catalyses O-propanoyl-(R)-carnitine(out) + chloride(out) + 2 Na(+)(out) = O-propanoyl-(R)-carnitine(in) + chloride(in) + 2 Na(+)(in). The catalysed reaction is L-isoleucine(out) + chloride(out) + 2 Na(+)(out) = L-isoleucine(in) + chloride(in) + 2 Na(+)(in). It catalyses the reaction L-methionine(out) + chloride(out) + 2 Na(+)(out) = L-methionine(in) + chloride(in) + 2 Na(+)(in). It carries out the reaction L-valine(out) + chloride(out) + 2 Na(+)(out) = L-valine(in) + chloride(in) + 2 Na(+)(in). The enzyme catalyses L-alanine(out) + chloride(out) + 2 Na(+)(out) = L-alanine(in) + chloride(in) + 2 Na(+)(in). The catalysed reaction is L-serine(out) + chloride(out) + 2 Na(+)(out) = L-serine(in) + chloride(in) + 2 Na(+)(in). It catalyses the reaction L-cysteine(out) + chloride(out) + 2 Na(+)(out) = L-cysteine(in) + chloride(in) + 2 Na(+)(in). It carries out the reaction L-asparagine(out) + chloride(out) + 2 Na(+)(out) = L-asparagine(in) + chloride(in) + 2 Na(+)(in). The enzyme catalyses L-threonine(out) + chloride(out) + 2 Na(+)(out) = L-threonine(in) + chloride(in) + 2 Na(+)(in). The catalysed reaction is L-phenylalanine(out) + chloride(out) + 2 Na(+)(out) = L-phenylalanine(in) + chloride(in) + 2 Na(+)(in). It catalyses the reaction L-tryptophan(out) + chloride(out) + 2 Na(+)(out) = L-tryptophan(in) + chloride(in) + 2 Na(+)(in). It carries out the reaction L-tyrosine(out) + chloride(out) + 2 Na(+)(out) = L-tyrosine(in) + chloride(in) + 2 Na(+)(in). The enzyme catalyses L-histidine(out) + chloride(out) + 2 Na(+)(out) = L-histidine(in) + chloride(in) + 2 Na(+)(in). The catalysed reaction is L-lysine(out) + chloride(out) + 2 Na(+)(out) = L-lysine(in) + chloride(in) + 2 Na(+)(in). It catalyses the reaction O-butanoyl-(R)-carnitine(out) + chloride(out) + 2 Na(+)(out) = O-butanoyl-(R)-carnitine(in) + chloride(in) + 2 Na(+)(in). Functionally, amino acid transporter that plays an important role in the absorption of amino acids in the intestinal tract. Mediates the uptake of a broad range of neutral and cationic amino acids (with the exception of proline) in a Na(+)/Cl(-)-dependent manner. Transports non-alpha-amino acids such as beta-alanine with low affinity, and has a higher affinity for dipolar and cationic amino acids such as leucine and lysine. Can also transport carnitine, butyrylcarnitine and propionylcarnitine coupled to the transmembrane gradients of Na(+) and Cl(-). This Mus musculus (Mouse) protein is Sodium- and chloride-dependent neutral and basic amino acid transporter B(0+).